The chain runs to 62 residues: Large ribosomal subunit protein bL28 (62 aa).

Positions 1-23 (MARRCFVTGKSAKAGNARSHSMR) are disordered.

It belongs to the bacterial ribosomal protein bL28 family.

The sequence is that of Large ribosomal subunit protein bL28 from Brevibacillus brevis (strain 47 / JCM 6285 / NBRC 100599).